Here is a 432-residue protein sequence, read N- to C-terminus: UDP-glucose 6-dehydrogenase (432 aa).

NAD(+) is bound by residues 2-19 (NITFIGSGYVGLVSGIIM), Val11, Asp30, Lys35, Thr121, and Glu152. Substrate-binding positions include 148–152 (EFLRE), Lys202, Asn206, 247–251 (FLNAG), and Gly255. The Nucleophile role is filled by Cys258. Lys261 is an NAD(+) binding site. Lys319 provides a ligand contact to substrate. NAD(+) is bound at residue Arg326.

It belongs to the UDP-glucose/GDP-mannose dehydrogenase family.

The enzyme catalyses UDP-alpha-D-glucose + 2 NAD(+) + H2O = UDP-alpha-D-glucuronate + 2 NADH + 3 H(+). The protein operates within nucleotide-sugar biosynthesis; UDP-alpha-D-glucuronate biosynthesis; UDP-alpha-D-glucuronate from UDP-alpha-D-glucose: step 1/1. This is UDP-glucose 6-dehydrogenase (udg) from Rickettsia conorii (strain ATCC VR-613 / Malish 7).